Here is a 546-residue protein sequence, read N- to C-terminus: Chaperonin GroEL (546 aa).

ATP-binding positions include 30–33, Lys-51, 87–91, Gly-415, 479–481, and Asp-495; these read TLGP, DGTTT, and NAA.

It belongs to the chaperonin (HSP60) family. In terms of assembly, forms a cylinder of 14 subunits composed of two heptameric rings stacked back-to-back. Interacts with the co-chaperonin GroES.

The protein localises to the cytoplasm. It catalyses the reaction ATP + H2O + a folded polypeptide = ADP + phosphate + an unfolded polypeptide.. Functionally, together with its co-chaperonin GroES, plays an essential role in assisting protein folding. The GroEL-GroES system forms a nano-cage that allows encapsulation of the non-native substrate proteins and provides a physical environment optimized to promote and accelerate protein folding. The chain is Chaperonin GroEL from Pseudomonas putida (strain ATCC 47054 / DSM 6125 / CFBP 8728 / NCIMB 11950 / KT2440).